Here is a 47-residue protein sequence, read N- to C-terminus: Snake venom metalloproteinase jararafibrase-4 (47 aa).

Positions 6–47 (RYIELFLVVDHGMFMKYNGNSDKIYYYIHQMVNIMKXAYXYL) constitute a Peptidase M12B domain. Ca(2+) is bound at residue E9.

The protein belongs to the venom metalloproteinase (M12B) family. In terms of assembly, monomer. Zn(2+) is required as a cofactor. Expressed by the venom gland.

The protein localises to the secreted. Its activity is regulated as follows. Inhibited by 1,10-phenanthroline and EDTA. Functionally, the metalloproteinase is a probable venom zinc protease that induces local hemorrhage in the skin of rats. Degrades type-IV collagen, gelatin, laminin and fibronectin. Has fibrinolytic activities. Has high hemagglutinating activity on red blood cells. Cleaves insulin B chain at 29-His-|-Leu-30, and 38-Ala-|-Leu-39 bonds. This is Snake venom metalloproteinase jararafibrase-4 from Bothrops jararaca (Jararaca).